We begin with the raw amino-acid sequence, 1012 residues long: MQAGNNGGAKLKNDEFDNLYQKNINRRETETVIRRSIPVQRDLTGKILPNQVAYYEEIEREVTFGATHHILDKDNFDSYIYPTNFEVREYQFNIVQKSLYQNTLCAIPTGMGKTFIASTVMLNFFRWSKNGKIIFTAPTRPLVAQQIKACLGITGIPHDQAAILLDKSRKNREDIWTQKRVFFTTPQVIENDLKRGVLNPKDIICLVFDEAHRATGSYAYTNVVKFIDRFNSSYRILALTATPGTDIASVQEVVNNLNISNIEIRTEESMDIIRYMKKRYKEKIEIGLTTEIEMIIEQLGIAVKPVLQQAVELGIYDECHPSQINSFVAMQKSQQIIANPTIAEGIKWRNFFILQLLNHVGQMLKRIKIYGIRSFYGYFRNKFSEFTTKYNMGKSTNKIAASFYYHPILKILMKNCDVYTSNSSFIGHDKLQKIINELSDFFLNSRLDSRVIIFTELRESALEIVKTIDNMGSSSIRPHIFIGQARGKENFDDEGFIRKNKPKGRKKADRLKRLEEDKQKQLSKAKQKEQEKVERSSRRTGSSEEAQISGMNQKQQKEVISKFKNGDYNVLVCTSIGEEGLDIGEVDMIICFDTTGSPIKNIQRMGRTGRKRDGKILLLFSGNESRKFEKAMEDYYDLQRLIGQNFVEYKKSDRILPSNITPECRKEFIHISAENNELNNMEDSDEVIRYATQCMLGKVPKSKKSKAKAAKEPKGKSKTFFMPDNVETGIVSAIALVNKKKSNSNESETVIKTECFPNLDDIEKDMLASLSSPVKPEVDDYKDGTFQKTDRFEEKITGSNLKDMLMSFSKRDEESKVTSFSSDGNYVNEPFGNISLGEKLDINDDFASTPIVKADMNIGQYDRSLIENNSRGGVLFKNAFEKEEGLLKKSEKVYFRDHYSIDNTVVIEPIPNFKRYNKSCLINHNPQVENILNLFKGINENKTQITIEMNRSRCIARGIEKGSIQLTGSDFSLANVMVAQKNNEADIVWDTSKTNKNSHENLNELLDSDSDF.

Positions 94-261 (IVQKSLYQNT…EVVNNLNISN (168 aa)) constitute a Helicase ATP-binding domain. 107 to 114 (IPTGMGKT) serves as a coordination point for ATP. A DEAH box motif is present at residues 209 to 212 (DEAH). In terms of domain architecture, Helicase C-terminal spans 430-654 (KLQKIINELS…NFVEYKKSDR (225 aa)). The tract at residues 493-555 (DEGFIRKNKP…AQISGMNQKQ (63 aa)) is disordered. A compositionally biased stretch (basic residues) spans 498 to 510 (RKNKPKGRKKADR). Over residues 511–537 (LKRLEEDKQKQLSKAKQKEQEKVERSS) the composition is skewed to basic and acidic residues.

Belongs to the DEAD box helicase family. DEAH subfamily. FANCM sub-subfamily. As to quaternary structure, interacts with the MHF histone-fold complex to form the FANCM-MHF complex.

It localises to the nucleus. It catalyses the reaction ATP + H2O = ADP + phosphate + H(+). ATP-dependent DNA helicase involved in DNA damage repair by homologous recombination and in genome maintenance. Capable of unwinding D-loops. Plays a role in limiting crossover recombinants during mitotic DNA double-strand break (DSB) repair. Component of a FANCM-MHF complex which promotes gene conversion at blocked replication forks, probably by reversal of the stalled fork. The chain is ATP-dependent DNA helicase MPH1 from Vanderwaltozyma polyspora (strain ATCC 22028 / DSM 70294 / BCRC 21397 / CBS 2163 / NBRC 10782 / NRRL Y-8283 / UCD 57-17) (Kluyveromyces polysporus).